Reading from the N-terminus, the 93-residue chain is Small ribosomal subunit protein uS19 (93 aa).

Belongs to the universal ribosomal protein uS19 family.

Functionally, protein S19 forms a complex with S13 that binds strongly to the 16S ribosomal RNA. The chain is Small ribosomal subunit protein uS19 from Leptospira borgpetersenii serovar Hardjo-bovis (strain JB197).